A 366-amino-acid polypeptide reads, in one-letter code: Phospho-2-dehydro-3-deoxyheptonate aldolase (366 aa).

The protein belongs to the class-I DAHP synthase family.

It carries out the reaction D-erythrose 4-phosphate + phosphoenolpyruvate + H2O = 7-phospho-2-dehydro-3-deoxy-D-arabino-heptonate + phosphate. Its pathway is metabolic intermediate biosynthesis; chorismate biosynthesis; chorismate from D-erythrose 4-phosphate and phosphoenolpyruvate: step 1/7. In terms of biological role, stereospecific condensation of phosphoenolpyruvate (PEP) and D-erythrose-4-phosphate (E4P) giving rise to 3-deoxy-D-arabino-heptulosonate-7-phosphate (DAHP). In Corynebacterium glutamicum (strain ATCC 13032 / DSM 20300 / JCM 1318 / BCRC 11384 / CCUG 27702 / LMG 3730 / NBRC 12168 / NCIMB 10025 / NRRL B-2784 / 534), this protein is Phospho-2-dehydro-3-deoxyheptonate aldolase (aroG).